We begin with the raw amino-acid sequence, 660 residues long: Bifunctional polymyxin resistance protein ArnA (660 aa).

Residues 1-304 (MKTVVFAYHD…TLGLVQGSRL (304 aa)) form a formyltransferase ArnAFT region. Residue 86–88 (HLI) coordinates (6R)-10-formyltetrahydrofolate. The Proton donor; for formyltransferase activity role is filled by H104. Residues R114 and 136–140 (VTRAD) contribute to the (6R)-10-formyltetrahydrofolate site. The dehydrogenase ArnADH stretch occupies residues 314–660 (RRTRVLILGV…RTVDLTDKPS (347 aa)). NAD(+)-binding positions include D347 and 368-369 (DI). UDP-alpha-D-glucuronate contacts are provided by residues A393, Y398, and 432–433 (TS). Residue E434 is the Proton acceptor; for decarboxylase activity of the active site. Residues R460, N492, 526–535 (KLIDGGKQKR), and Y613 contribute to the UDP-alpha-D-glucuronate site. R619 functions as the Proton donor; for decarboxylase activity in the catalytic mechanism.

The protein in the N-terminal section; belongs to the Fmt family. UDP-L-Ara4N formyltransferase subfamily. This sequence in the C-terminal section; belongs to the NAD(P)-dependent epimerase/dehydratase family. UDP-glucuronic acid decarboxylase subfamily. Homohexamer, formed by a dimer of trimers.

It catalyses the reaction UDP-alpha-D-glucuronate + NAD(+) = UDP-beta-L-threo-pentopyranos-4-ulose + CO2 + NADH. The enzyme catalyses UDP-4-amino-4-deoxy-beta-L-arabinose + (6R)-10-formyltetrahydrofolate = UDP-4-deoxy-4-formamido-beta-L-arabinose + (6S)-5,6,7,8-tetrahydrofolate + H(+). It participates in nucleotide-sugar biosynthesis; UDP-4-deoxy-4-formamido-beta-L-arabinose biosynthesis; UDP-4-deoxy-4-formamido-beta-L-arabinose from UDP-alpha-D-glucuronate: step 1/3. Its pathway is nucleotide-sugar biosynthesis; UDP-4-deoxy-4-formamido-beta-L-arabinose biosynthesis; UDP-4-deoxy-4-formamido-beta-L-arabinose from UDP-alpha-D-glucuronate: step 3/3. It functions in the pathway bacterial outer membrane biogenesis; lipopolysaccharide biosynthesis. In terms of biological role, bifunctional enzyme that catalyzes the oxidative decarboxylation of UDP-glucuronic acid (UDP-GlcUA) to UDP-4-keto-arabinose (UDP-Ara4O) and the addition of a formyl group to UDP-4-amino-4-deoxy-L-arabinose (UDP-L-Ara4N) to form UDP-L-4-formamido-arabinose (UDP-L-Ara4FN). The modified arabinose is attached to lipid A and is required for resistance to polymyxin and cationic antimicrobial peptides. This Shigella dysenteriae serotype 1 (strain Sd197) protein is Bifunctional polymyxin resistance protein ArnA.